A 120-amino-acid polypeptide reads, in one-letter code: Cell division protein FtsL (120 aa).

At 1 to 36 (MTNLAVKYKQQAQEEVQIQTPPQQMAKPKVKAKITR) the chain is on the cytoplasmic side. Residues 37–57 (IEKLLYVAFIGFLLYACVAFI) form a helical membrane-spanning segment. The Extracellular portion of the chain corresponds to 58–120 (GNKAGLYQVN…INANNVKGLK (63 aa)).

It belongs to the FtsL family.

The protein resides in the cell membrane. Essential cell division protein. The protein is Cell division protein FtsL of Bacillus cereus (strain ATCC 14579 / DSM 31 / CCUG 7414 / JCM 2152 / NBRC 15305 / NCIMB 9373 / NCTC 2599 / NRRL B-3711).